A 421-amino-acid chain; its full sequence is D-amino acid dehydrogenase (421 aa).

3 to 17 contacts FAD; the sequence is ILILGSGVVGTASAY.

It belongs to the DadA oxidoreductase family. It depends on FAD as a cofactor.

It carries out the reaction a D-alpha-amino acid + A + H2O = a 2-oxocarboxylate + AH2 + NH4(+). It functions in the pathway amino-acid degradation; D-alanine degradation; NH(3) and pyruvate from D-alanine: step 1/1. Its function is as follows. Oxidative deamination of D-amino acids. The protein is D-amino acid dehydrogenase of Xanthobacter autotrophicus (strain ATCC BAA-1158 / Py2).